The chain runs to 185 residues: MIKDIIKNAEEKMQKTVTVLKSELGTMKAGRANPSMLDKIQIDYYGSMCPLSQAANISSPEPRVLMITPWEKQLLKEIEKAILKSDLGLNPSNDGSIIRLVIPELTEETRKDLVKKVKKTGEESKVAIRSIRRDANDKIKALKKDGDLSEDQVKKGEDDVQKKTDAIIKDIDKIIVDKEKEILAI.

It belongs to the RRF family.

It localises to the cytoplasm. Functionally, responsible for the release of ribosomes from messenger RNA at the termination of protein biosynthesis. May increase the efficiency of translation by recycling ribosomes from one round of translation to another. This Clostridium botulinum (strain Eklund 17B / Type B) protein is Ribosome-recycling factor.